Consider the following 238-residue polypeptide: dITP/XTP pyrophosphatase (238 aa).

Position 7–12 (7–12) interacts with substrate; sequence SANQHK. Asp-89 (proton acceptor) is an active-site residue. A Mg(2+)-binding site is contributed by Asp-89. Substrate contacts are provided by residues Ser-90, 191–194, Lys-217, and 222–223; these read FGYD and HR.

This sequence belongs to the HAM1 NTPase family. Homodimer. The cofactor is Mg(2+).

It carries out the reaction XTP + H2O = XMP + diphosphate + H(+). The catalysed reaction is dITP + H2O = dIMP + diphosphate + H(+). It catalyses the reaction ITP + H2O = IMP + diphosphate + H(+). In terms of biological role, pyrophosphatase that catalyzes the hydrolysis of nucleoside triphosphates to their monophosphate derivatives, with a high preference for the non-canonical purine nucleotides XTP (xanthosine triphosphate), dITP (deoxyinosine triphosphate) and ITP. Seems to function as a house-cleaning enzyme that removes non-canonical purine nucleotides from the nucleotide pool, thus preventing their incorporation into DNA/RNA and avoiding chromosomal lesions. This Helicobacter hepaticus (strain ATCC 51449 / 3B1) protein is dITP/XTP pyrophosphatase.